A 179-amino-acid polypeptide reads, in one-letter code: Large ribosomal subunit protein uL5 (179 aa).

Belongs to the universal ribosomal protein uL5 family. In terms of assembly, part of the 50S ribosomal subunit; part of the 5S rRNA/L5/L18/L25 subcomplex. Contacts the 5S rRNA and the P site tRNA. Forms a bridge to the 30S subunit in the 70S ribosome.

Functionally, this is one of the proteins that bind and probably mediate the attachment of the 5S RNA into the large ribosomal subunit, where it forms part of the central protuberance. In the 70S ribosome it contacts protein S13 of the 30S subunit (bridge B1b), connecting the 2 subunits; this bridge is implicated in subunit movement. Contacts the P site tRNA; the 5S rRNA and some of its associated proteins might help stabilize positioning of ribosome-bound tRNAs. This Aliivibrio salmonicida (strain LFI1238) (Vibrio salmonicida (strain LFI1238)) protein is Large ribosomal subunit protein uL5.